Consider the following 366-residue polypeptide: tRNA/tmRNA (uracil-C(5))-methyltransferase (366 aa).

5 residues coordinate S-adenosyl-L-methionine: Gln190, Tyr218, Asn223, Glu239, and Asp299. Cys324 (nucleophile) is an active-site residue. Catalysis depends on Glu358, which acts as the Proton acceptor.

Belongs to the class I-like SAM-binding methyltransferase superfamily. RNA M5U methyltransferase family. TrmA subfamily.

It catalyses the reaction uridine(54) in tRNA + S-adenosyl-L-methionine = 5-methyluridine(54) in tRNA + S-adenosyl-L-homocysteine + H(+). The catalysed reaction is uridine(341) in tmRNA + S-adenosyl-L-methionine = 5-methyluridine(341) in tmRNA + S-adenosyl-L-homocysteine + H(+). In terms of biological role, dual-specificity methyltransferase that catalyzes the formation of 5-methyluridine at position 54 (m5U54) in all tRNAs, and that of position 341 (m5U341) in tmRNA (transfer-mRNA). The sequence is that of tRNA/tmRNA (uracil-C(5))-methyltransferase from Cronobacter sakazakii (strain ATCC BAA-894) (Enterobacter sakazakii).